Consider the following 416-residue polypeptide: Glutamyl-tRNA reductase (416 aa).

Residues 49 to 52 (TCNR), Ser-105, 110 to 112 (EPQ), and Gln-116 contribute to the substrate site. Catalysis depends on Cys-50, which acts as the Nucleophile. Position 185–190 (185–190 (GAGETI)) interacts with NADP(+).

Belongs to the glutamyl-tRNA reductase family. In terms of assembly, homodimer.

The enzyme catalyses (S)-4-amino-5-oxopentanoate + tRNA(Glu) + NADP(+) = L-glutamyl-tRNA(Glu) + NADPH + H(+). It participates in porphyrin-containing compound metabolism; protoporphyrin-IX biosynthesis; 5-aminolevulinate from L-glutamyl-tRNA(Glu): step 1/2. Catalyzes the NADPH-dependent reduction of glutamyl-tRNA(Glu) to glutamate 1-semialdehyde (GSA). The sequence is that of Glutamyl-tRNA reductase from Shewanella piezotolerans (strain WP3 / JCM 13877).